Reading from the N-terminus, the 495-residue chain is ATP synthase subunit beta, chloroplastic (495 aa).

172–179 contacts ATP; sequence GGAGVGKT.

The protein belongs to the ATPase alpha/beta chains family. As to quaternary structure, F-type ATPases have 2 components, CF(1) - the catalytic core - and CF(0) - the membrane proton channel. CF(1) has five subunits: alpha(3), beta(3), gamma(1), delta(1), epsilon(1). CF(0) has four main subunits: a(1), b(1), b'(1) and c(9-12).

It is found in the plastid. It localises to the chloroplast thylakoid membrane. The enzyme catalyses ATP + H2O + 4 H(+)(in) = ADP + phosphate + 5 H(+)(out). Produces ATP from ADP in the presence of a proton gradient across the membrane. The catalytic sites are hosted primarily by the beta subunits. This Bowiea volubilis (Climbing onion) protein is ATP synthase subunit beta, chloroplastic.